The chain runs to 153 residues: Insulin-like growth factor 1 (153 aa).

The tract at residues 49-77 (GPETLCGAELVDALQFVCGDRGFYFNKPT) is b. 3 cysteine pairs are disulfide-bonded: C54–C96, C66–C109, and C95–C100. The tract at residues 78–89 (GYGSSSRRAPQT) is c. The tract at residues 90-110 (GIVDECCFRSCDLRRLEMYCA) is a. The tract at residues 111–118 (PLKPAKSA) is d. A propeptide spans 119-153 (RSVRAQRHTDMPKAQKEVHLKNASRGSAGNKNYRM) (e peptide). Residues 120–153 (SVRAQRHTDMPKAQKEVHLKNASRGSAGNKNYRM) form a disordered region. The segment covering 125–138 (RHTDMPKAQKEVHL) has biased composition (basic and acidic residues). Over residues 142-153 (SRGSAGNKNYRM) the composition is skewed to polar residues.

The protein belongs to the insulin family. Forms a ternary complex with IGFR1 and ITGAV:ITGB3. Forms a ternary complex with IGFR1 and ITGA6:ITGB4. Forms a ternary complex with IGFBP3 and ALS.

The protein resides in the secreted. Functionally, the insulin-like growth factors, isolated from plasma, are structurally and functionally related to insulin but have a much higher growth-promoting activity. May be a physiological regulator of [1-14C]-2-deoxy-D-glucose (2DG) transport and glycogen synthesis in osteoblasts. Stimulates glucose transport in bone-derived osteoblastic (PyMS) cells and is effective at much lower concentrations than insulin, not only regarding glycogen and DNA synthesis but also with regard to enhancing glucose uptake. May play a role in synapse maturation. Ca(2+)-dependent exocytosis of IGF1 is required for sensory perception of smell in the olfactory bulb. Acts as a ligand for IGF1R. Binds to the alpha subunit of IGF1R, leading to the activation of the intrinsic tyrosine kinase activity which autophosphorylates tyrosine residues in the beta subunit thus initiating a cascade of down-stream signaling events leading to activation of the PI3K-AKT/PKB and the Ras-MAPK pathways. Binds to integrins ITGAV:ITGB3 and ITGA6:ITGB4. Its binding to integrins and subsequent ternary complex formation with integrins and IGFR1 are essential for IGF1 signaling. Induces the phosphorylation and activation of IGFR1, MAPK3/ERK1, MAPK1/ERK2 and AKT1. As part of the MAPK/ERK signaling pathway, acts as a negative regulator of apoptosis in cardiomyocytes via promotion of STUB1/CHIP-mediated ubiquitination and degradation of ICER-type isoforms of CREM. In Panthera tigris altaica (Siberian tiger), this protein is Insulin-like growth factor 1.